A 338-amino-acid chain; its full sequence is Mitochondrial amidoxime reducing component 2 (338 aa).

The N-terminal 35 residues, 1–35, are a transit peptide targeting the mitochondrion; sequence MGSSSSTALARLGLPGQPRSTWLGVAALGLAAVAL. Glycyl lysine isopeptide (Lys-Gly) (interchain with G-Cter in ubiquitin) cross-links involve residues Lys59, Lys138, and Lys144. Lys156 is modified (N6-acetyllysine; alternate). A Glycyl lysine isopeptide (Lys-Gly) (interchain with G-Cter in ubiquitin); alternate cross-link involves residue Lys156. Residues Lys173, Lys187, Lys289, and Lys296 each participate in a glycyl lysine isopeptide (Lys-Gly) (interchain with G-Cter in ubiquitin) cross-link. Residues 188 to 336 enclose the MOSC domain; the sequence is GRTTKKLYPS…LRVGDPVYRM (149 aa).

As to quaternary structure, component of a complex composed of cytochrome b5, NADH-cytochrome b5 reductase (CYB5R3) and MTARC2. It depends on Mo-molybdopterin as a cofactor. In terms of processing, ubiquitinated by PRKN during mitophagy, leading to its degradation and enhancement of mitophagy. Deubiquitinated by USP30.

It localises to the mitochondrion outer membrane. Its subcellular location is the peroxisome. The catalysed reaction is N(omega)-hydroxy-L-arginine + 2 Fe(II)-[cytochrome b5] + 2 H(+) = L-arginine + 2 Fe(III)-[cytochrome b5] + H2O. Functionally, catalyzes the reduction of N-oxygenated molecules, acting as a counterpart of cytochrome P450 and flavin-containing monooxygenases in metabolic cycles. As a component of prodrug-converting system, reduces a multitude of N-hydroxylated prodrugs particularly amidoximes, leading to increased drug bioavailability. May be involved in mitochondrial N(omega)-hydroxy-L-arginine (NOHA) reduction, regulating endogenous nitric oxide levels and biosynthesis. Postulated to cleave the N-OH bond of N-hydroxylated substrates in concert with electron transfer from NADH to cytochrome b5 reductase then to cytochrome b5, the ultimate electron donor that primes the active site for substrate reduction. This chain is Mitochondrial amidoxime reducing component 2 (Mtarc2), found in Rattus norvegicus (Rat).